A 473-amino-acid chain; its full sequence is H(+)/Cl(-) exchange transporter ClcA (473 aa).

Residues 1 to 32 (MKTDTPSLETPQAARLRRRQLIRQLLERDKTP) lie on the Cytoplasmic side of the membrane. A helical membrane pass occupies residues 33 to 69 (LAILFMAAVVGTLVGLAAVAFDKGVAWLQNQRMGALV). The Periplasmic portion of the chain corresponds to 70 to 76 (HTADNYP). Residues 77–100 (LLLTVAFLCSAVLAMFGYFLVRKY) form a helical membrane-spanning segment. Residues 106–110 (GSGIP) carry the Selectivity filter part_1 motif. Serine 107 is a binding site for chloride. The helical intramembrane region spans 109–116 (IPEIEGAL). Over 117–123 (EDQRPVR) the chain is Cytoplasmic. 2 consecutive transmembrane segments (helical) span residues 124 to 141 (WWRVLPVKFFGGLGTLGG) and 148 to 166 (EGPTVQIGGNIGRMVLDIF). Positions 146 to 150 (GREGP) match the Selectivity filter part_2 motif. Over 167–176 (RLKGDEARHT) the chain is Cytoplasmic. 2 consecutive intramembrane regions (helical) follow at residues 177–189 (LLATGAAAGLAAA) and 193–201 (PLAGILFII). Residues 202 to 214 (EEMRPQFRYTLIS) are Cytoplasmic-facing. The helical transmembrane segment at 215–232 (IKAVFIGVIMSTIMYRIF) threads the bilayer. At 233–252 (NHEVALIDVGKLSDAPLNTL) the chain is on the periplasmic side. The helical transmembrane segment at 253–281 (WLYLILGIIFGIFGPIFNKWVLGMQDLLH) threads the bilayer. The Cytoplasmic segment spans residues 282–287 (RVHGGN). Residues 288–309 (ITKWVLMGGAIGGLCGLLGFVA) form a helical membrane-spanning segment. The Periplasmic segment spans residues 310 to 329 (PATSGGGFNLIPIATAGNFS). 2 consecutive transmembrane segments (helical) span residues 330-349 (MGMLVFIFVARVITTLLCFS) and 355-376 (GIFAPMLALGTVLGTAFGMVAV). Positions 355–359 (GIFAP) match the Selectivity filter part_3 motif. Chloride-binding residues include isoleucine 356 and phenylalanine 357. Residues 377-386 (ELFPQYHLEA) lie on the Periplasmic side of the membrane. The helical intramembrane region spans 387 to 401 (GTFAIAGMGALLAAS). Positions 402-404 (IRA) form an intramembrane region, note=Loop between two helices. An intramembrane region (helical) is located at residues 405–416 (PLTGIILVLEMT). Positions 417–421 (DNYQL) form an intramembrane region, note=Loop between two helices. The chain crosses the membrane as a helical span at residues 422–438 (ILPMIITGLGATLLAQF). The Cytoplasmic portion of the chain corresponds to 439-473 (TGGKPLYSAILARTLAKQEAEQLARSKAASASENT). Tyrosine 445 contributes to the chloride binding site.

The protein belongs to the chloride channel (TC 2.A.49) family. ClcA subfamily. Homodimer.

The protein resides in the cell inner membrane. The catalysed reaction is 2 chloride(in) + H(+)(out) = 2 chloride(out) + H(+)(in). Functionally, proton-coupled chloride transporter. Functions as antiport system and exchanges two chloride ions for 1 proton. Probably acts as an electrical shunt for an outwardly-directed proton pump that is linked to amino acid decarboxylation, as part of the extreme acid resistance (XAR) response. The sequence is that of H(+)/Cl(-) exchange transporter ClcA from Escherichia coli O139:H28 (strain E24377A / ETEC).